Here is a 78-residue protein sequence, read N- to C-terminus: Hainantoxin-XX.3 (78 aa).

A signal peptide spans Met1–Ala23. Residues Glu24–Arg47 constitute a propeptide that is removed on maturation. 3 disulfides stabilise this stretch: Cys49-Cys62, Cys56-Cys66, and Cys61-Cys77.

This sequence belongs to the hainantoxin family. 20 subfamily. As to expression, expressed by the venom gland.

Its subcellular location is the secreted. Its function is as follows. Putative ion channel inhibitor. The sequence is that of Hainantoxin-XX.3 from Cyriopagopus hainanus (Chinese bird spider).